The following is an 840-amino-acid chain: Probable alpha-glucuronidase A (840 aa).

The first 19 residues, 1–19 (MWSGIPIFALLSSIGIAAA), serve as a signal peptide directing secretion. N50, N149, N222, N262, N279, N310, N465, N527, N576, N610, N682, N723, and N732 each carry an N-linked (GlcNAc...) asparagine glycan.

This sequence belongs to the glycosyl hydrolase 67 family.

It is found in the secreted. The enzyme catalyses an alpha-D-glucuronoside + H2O = D-glucuronate + an alcohol. Alpha-glucuronidase involved in the hydrolysis of xylan, a major structural heterogeneous polysaccharide found in plant biomass representing the second most abundant polysaccharide in the biosphere, after cellulose. Releases 4-O-methylglucuronic acid from xylan. The chain is Probable alpha-glucuronidase A (aguA) from Aspergillus fumigatus (strain CBS 144.89 / FGSC A1163 / CEA10) (Neosartorya fumigata).